The sequence spans 173 residues: 3-hydroxydecanoyl-[acyl-carrier-protein] dehydratase (173 aa).

Histidine 71 is an active-site residue.

This sequence belongs to the thioester dehydratase family. FabA subfamily. Homodimer.

It localises to the cytoplasm. The enzyme catalyses a (3R)-hydroxyacyl-[ACP] = a (2E)-enoyl-[ACP] + H2O. The catalysed reaction is (3R)-hydroxydecanoyl-[ACP] = (2E)-decenoyl-[ACP] + H2O. It catalyses the reaction (2E)-decenoyl-[ACP] = (3Z)-decenoyl-[ACP]. Its pathway is lipid metabolism; fatty acid biosynthesis. In terms of biological role, necessary for the introduction of cis unsaturation into fatty acids. Catalyzes the dehydration of (3R)-3-hydroxydecanoyl-ACP to E-(2)-decenoyl-ACP and then its isomerization to Z-(3)-decenoyl-ACP. Can catalyze the dehydratase reaction for beta-hydroxyacyl-ACPs with saturated chain lengths up to 16:0, being most active on intermediate chain length. This Bradyrhizobium sp. (strain BTAi1 / ATCC BAA-1182) protein is 3-hydroxydecanoyl-[acyl-carrier-protein] dehydratase.